The chain runs to 535 residues: Alcohol O-acetyltransferase 2 (535 aa).

Residues glycine 19–arginine 36 are membrane association. Catalysis depends on charge relay system residues histidine 189 and aspartate 193. A membrane association region spans residues arginine 515–phenylalanine 532.

This sequence belongs to the ATF1 alcohol acetyltransferase family.

It is found in the lipid droplet. Its subcellular location is the endoplasmic reticulum membrane. The enzyme catalyses an aliphatic alcohol + acetyl-CoA = an acetyl ester + CoA. Functionally, can use acetyl-CoA to synthesize acetate esters from various alcohols, producing ethyl acetate, isoamyl acetate, isobutyl acetate, butyl acetate, hexyl acetate, heptyl acetate and octyl acetate. ATF2 seems to play only a minor role in the acetate ester synthesis, compared to ATF1. Plays an active role in the detoxification hydroxysteroids and possibly certain phytochemicals, in association with the efflux pumps PDR5 and SNQ2. This is Alcohol O-acetyltransferase 2 from Saccharomyces cerevisiae (strain ATCC 204508 / S288c) (Baker's yeast).